The primary structure comprises 117 residues: uncharacterized protein (117 aa).

This is an uncharacterized protein from Schizosaccharomyces pombe (strain 972 / ATCC 24843) (Fission yeast).